We begin with the raw amino-acid sequence, 330 residues long: DNA-directed RNA polymerase subunit alpha (330 aa).

The segment at 1–236 (MQGSVTEFLK…EQLDAFVDLR (236 aa)) is alpha N-terminal domain (alpha-NTD). The alpha C-terminal domain (alpha-CTD) stretch occupies residues 250 to 330 (FDPILLRPVD…NWPPASIAED (81 aa)).

This sequence belongs to the RNA polymerase alpha chain family. Homodimer. The RNAP catalytic core consists of 2 alpha, 1 beta, 1 beta' and 1 omega subunit. When a sigma factor is associated with the core the holoenzyme is formed, which can initiate transcription.

It catalyses the reaction RNA(n) + a ribonucleoside 5'-triphosphate = RNA(n+1) + diphosphate. DNA-dependent RNA polymerase catalyzes the transcription of DNA into RNA using the four ribonucleoside triphosphates as substrates. The sequence is that of DNA-directed RNA polymerase subunit alpha from Vibrio parahaemolyticus serotype O3:K6 (strain RIMD 2210633).